We begin with the raw amino-acid sequence, 150 residues long: Small ribosomal subunit protein eS19 (150 aa).

This sequence belongs to the eukaryotic ribosomal protein eS19 family. Part of the 30S ribosomal subunit.

Functionally, may be involved in maturation of the 30S ribosomal subunit. In Thermococcus kodakarensis (strain ATCC BAA-918 / JCM 12380 / KOD1) (Pyrococcus kodakaraensis (strain KOD1)), this protein is Small ribosomal subunit protein eS19.